The primary structure comprises 136 residues: Large ribosomal subunit protein uL13 (136 aa).

The protein belongs to the universal ribosomal protein uL13 family. In terms of assembly, part of the 50S ribosomal subunit.

In terms of biological role, this protein is one of the early assembly proteins of the 50S ribosomal subunit, although it is not seen to bind rRNA by itself. It is important during the early stages of 50S assembly. In Thermoplasma volcanium (strain ATCC 51530 / DSM 4299 / JCM 9571 / NBRC 15438 / GSS1), this protein is Large ribosomal subunit protein uL13.